A 344-amino-acid polypeptide reads, in one-letter code: Tetraacyldisaccharide 4'-kinase (344 aa).

An ATP-binding site is contributed by 68–75 (TAGGNGKT).

This sequence belongs to the LpxK family.

It catalyses the reaction a lipid A disaccharide + ATP = a lipid IVA + ADP + H(+). Its pathway is glycolipid biosynthesis; lipid IV(A) biosynthesis; lipid IV(A) from (3R)-3-hydroxytetradecanoyl-[acyl-carrier-protein] and UDP-N-acetyl-alpha-D-glucosamine: step 6/6. Its function is as follows. Transfers the gamma-phosphate of ATP to the 4'-position of a tetraacyldisaccharide 1-phosphate intermediate (termed DS-1-P) to form tetraacyldisaccharide 1,4'-bis-phosphate (lipid IVA). The sequence is that of Tetraacyldisaccharide 4'-kinase from Photobacterium profundum (strain SS9).